Reading from the N-terminus, the 223-residue chain is Transmembrane protein 114 (223 aa).

The chain crosses the membrane as a helical span at residues Gly7–Ile27. Residues Asn55 and Asn89 are each glycosylated (N-linked (GlcNAc...) asparagine). A run of 3 helical transmembrane segments spans residues Phe106–Leu126, Leu134–Ile154, and Leu189–Ala209.

It belongs to the PMP-22/EMP/MP20 family.

It localises to the cell junction. The protein resides in the tight junction. The protein localises to the lateral cell membrane. It is found in the apical cell membrane. The sequence is that of Transmembrane protein 114 from Homo sapiens (Human).